The chain runs to 461 residues: Cysteine--tRNA ligase (461 aa).

Position 28 (cysteine 28) interacts with Zn(2+). Residues 30–40 (ITVYDLCHIGH) carry the 'HIGH' region motif. Zn(2+) is bound by residues cysteine 209, histidine 234, and glutamate 238. The 'KMSKS' region motif lies at 266–270 (KMSKS). ATP is bound at residue lysine 269.

Belongs to the class-I aminoacyl-tRNA synthetase family. As to quaternary structure, monomer. Requires Zn(2+) as cofactor.

The protein resides in the cytoplasm. It catalyses the reaction tRNA(Cys) + L-cysteine + ATP = L-cysteinyl-tRNA(Cys) + AMP + diphosphate. The protein is Cysteine--tRNA ligase of Escherichia coli (strain 55989 / EAEC).